An 836-amino-acid chain; its full sequence is Translation initiation factor IF-2 (836 aa).

The interval 1–233 is disordered; that stretch reads MSDTDGKKPL…RSLAAMKRKQ (233 aa). The segment covering 18–27 has biased composition (polar residues); it reads SGQVKQSFSH. The segment covering 50–60 has biased composition (low complexity); the sequence is SGSSTTTSSPS. Residues 88–156 show a composition bias toward basic and acidic residues; sequence KLREVEDAKR…AARRAEEAKR (69 aa). The segment covering 167–176 has biased composition (low complexity); the sequence is PAESRASAPP. The segment covering 185-206 has biased composition (basic and acidic residues); it reads SRKEREREADRDRTTKKDDSRR. Positions 333-501 constitute a tr-type G domain; it reads PRPPIITIMG…NIALQAEILD (169 aa). The tract at residues 342-349 is G1; it reads GHVDHGKT. 342–349 is a binding site for GTP; it reads GHVDHGKT. The interval 367 to 371 is G2; that stretch reads GITQH. A G3 region spans residues 389–392; it reads DTPG. Residues 389 to 393 and 443 to 446 each bind GTP; these read DTPGH and NKID. The interval 443 to 446 is G4; it reads NKID. Residues 479 to 481 form a G5 region; that stretch reads SAK.

This sequence belongs to the TRAFAC class translation factor GTPase superfamily. Classic translation factor GTPase family. IF-2 subfamily.

The protein localises to the cytoplasm. Its function is as follows. One of the essential components for the initiation of protein synthesis. Protects formylmethionyl-tRNA from spontaneous hydrolysis and promotes its binding to the 30S ribosomal subunits. Also involved in the hydrolysis of GTP during the formation of the 70S ribosomal complex. The protein is Translation initiation factor IF-2 of Cereibacter sphaeroides (strain ATCC 17023 / DSM 158 / JCM 6121 / CCUG 31486 / LMG 2827 / NBRC 12203 / NCIMB 8253 / ATH 2.4.1.) (Rhodobacter sphaeroides).